The chain runs to 868 residues: DNA mismatch repair protein MutS (868 aa).

620–627 (GPNMSGKS) lines the ATP pocket.

The protein belongs to the DNA mismatch repair MutS family.

This protein is involved in the repair of mismatches in DNA. It is possible that it carries out the mismatch recognition step. This protein has a weak ATPase activity. This chain is DNA mismatch repair protein MutS, found in Flavobacterium johnsoniae (strain ATCC 17061 / DSM 2064 / JCM 8514 / BCRC 14874 / CCUG 350202 / NBRC 14942 / NCIMB 11054 / UW101) (Cytophaga johnsonae).